The following is a 118-amino-acid chain: Cysteine--tRNA ligase (118 aa).

Cys28 lines the Zn(2+) pocket. Residues 30–40 (PTVYNYIHIGN) carry the 'HIGH' region motif.

The protein belongs to the class-I aminoacyl-tRNA synthetase family. In terms of assembly, monomer. Zn(2+) is required as a cofactor.

It is found in the cytoplasm. It carries out the reaction tRNA(Cys) + L-cysteine + ATP = L-cysteinyl-tRNA(Cys) + AMP + diphosphate. This Staphylococcus xylosus protein is Cysteine--tRNA ligase (cysS).